A 630-amino-acid polypeptide reads, in one-letter code: MENNVTTISREELEELREAFNKIDIDNSGYVSDYELQDLFKEASLPLPGYKVREIIEKIFAVTDSNKDGKINFEEFVSLIQELKSKDVSKSYRKSINKKLGITALGGTSSISTEGTQHSYSEEEKVAFVNWINKALQDDPDCKHILPMNPSDASLFKSLADGILLCKMINFSQPDTIDERAINKKKLTPFTISENLNLALNSASAIGCTVVNIGSQDLQEGKPHLVLGLLWQIIKVGLFADIEISRNEALIALLNEGEELDQLMKLSPEELLLRWVNYHLANAGWQKISNFSQDIRDSRAYYHLLNQIAPKGDDFDEIHVEIDFSGFNDKNDLRRAECMLQQADKLGCRQFVTPADVVAGNPKLNLAFVANLFNTYPALHKPDNSSYDLTLLEGESNEERTFRNWMNSLGVSPYVNHLYSDLSDALIIFQLYEMTRVPVDWTHVNKRPYPLLGGNMKKIENCNYAVELGKTKAKFSLVGIAGHDLNEGNPTLTLALIWQLMRRYTLNVLSDLGEGEKVNDEIIIKWVNQTLANANKKTSITSFKDKSISTSLPVLDLIDAIAPKAVRQEMVKREDLSYQDKLNNAKYAISVARKIGARIYALPDDLVEVKPKMVMTVFACLMGRGLNKIK.

Residues 1-114 (MENNVTTISR…LGGTSSISTE (114 aa)) are fimbrin headpiece. 2 consecutive EF-hand domains span residues 11 to 46 (EELE…ASLP) and 51 to 86 (KVRE…LKSK). 10 residues coordinate Ca(2+): Asp-24, Asp-26, Ser-28, Tyr-30, Glu-35, Asp-64, Asn-66, Asp-68, Lys-70, and Glu-75. Actin-binding stretches follow at residues 108–375 (TSSI…LFNT) and 376–624 (YPAL…LMGR). The tract at residues 115–630 (GTQHSYSEEE…LMGRGLNKIK (516 aa)) is fimbrin core. Calponin-homology (CH) domains follow at residues 122 to 238 (EEEK…KVGL), 266 to 377 (LSPE…NTYP), 396 to 505 (SNEE…RRYT), and 517 to 626 (KVND…GRGL).

As to quaternary structure, monomer. In terms of processing, the N-terminus is blocked.

It is found in the cytoplasm. It localises to the cell projection. Its subcellular location is the stereocilium. Its function is as follows. Actin-bundling protein. In the inner ear, it is required for stereocilia formation. Mediates liquid packing of actin filaments that is necessary for stereocilia to grow to their proper dimensions. The protein is Plastin-1 (PLS1) of Gallus gallus (Chicken).